The chain runs to 360 residues: Viral protein TPX (360 aa).

The disordered stretch occupies residues 269–289 (TVTPISSPSPTPTPTPTPTPT). The Thr-Pro(N) repeat unit spans residues 270 to 291 (VTPISSPSPTPTPTPTPTPTPT). A compositionally biased stretch (pro residues) spans 275–289 (SPSPTPTPTPTPTPT). The interval 278 to 353 (PTPTPTPTPT…PTPTPTPTPT (76 aa)) is 3 Thr-Pro repeats regions and two near identical repeats. A repeat spans 292–301 (YDITYVVFDV). Residues 302–322 (TPSPTPTPTLTSTPTPTPTPT) form a Thr-Pro(N) repeat. The segment at residues 323–332 (YDITYVIFDV) is a repeat. The tract at residues 332 to 360 (VTPSPTPTPTPTPTPTPTPTPTSTTSSNI) is disordered. The Thr-Pro(N) repeat unit spans residues 333–353 (TPSPTPTPTPTPTPTPTPTPT). Residues 335 to 351 (SPTPTPTPTPTPTPTPT) show a composition bias toward pro residues.

This chain is Viral protein TPX, found in Thermoproteus tenax (TTV1).